The chain runs to 141 residues: Large ribosomal subunit protein uL11 (141 aa).

This sequence belongs to the universal ribosomal protein uL11 family. In terms of assembly, part of the ribosomal stalk of the 50S ribosomal subunit. Interacts with L10 and the large rRNA to form the base of the stalk. L10 forms an elongated spine to which L12 dimers bind in a sequential fashion forming a multimeric L10(L12)X complex. One or more lysine residues are methylated.

Forms part of the ribosomal stalk which helps the ribosome interact with GTP-bound translation factors. In Trichlorobacter lovleyi (strain ATCC BAA-1151 / DSM 17278 / SZ) (Geobacter lovleyi), this protein is Large ribosomal subunit protein uL11.